A 249-amino-acid polypeptide reads, in one-letter code: Triosephosphate isomerase (249 aa).

The substrate site is built by N12 and K14. K14 carries the post-translational modification N6-acetyllysine. At Y68 the chain carries 3'-nitrotyrosine. A Phosphoserine modification is found at S80. The active-site Electrophile is H96. S106 bears the Phosphoserine mark. A Glycyl lysine isopeptide (Lys-Gly) (interchain with G-Cter in SUMO1) cross-link involves residue K142. The residue at position 149 (K149) is an N6-succinyllysine. Position 156 is an N6-acetyllysine; alternate (K156). Position 156 is an N6-succinyllysine; alternate (K156). A Phosphoserine modification is found at S159. Residue E166 is the Proton acceptor of the active site. T173 carries the phosphothreonine modification. An N6-acetyllysine; alternate modification is found at K194. Residue K194 is modified to N6-succinyllysine; alternate. K194 carries the post-translational modification N6-methyllysine; alternate. At S198 the chain carries Phosphoserine. 3'-nitrotyrosine is present on Y209. A Phosphoserine modification is found at S212. T214 is subject to Phosphothreonine. At S223 the chain carries Phosphoserine. K238 bears the N6-acetyllysine mark.

It belongs to the triosephosphate isomerase family. As to quaternary structure, homodimer.

Its subcellular location is the cytoplasm. The enzyme catalyses dihydroxyacetone phosphate = methylglyoxal + phosphate. The catalysed reaction is D-glyceraldehyde 3-phosphate = dihydroxyacetone phosphate. It functions in the pathway carbohydrate degradation; glycolysis; D-glyceraldehyde 3-phosphate from glycerone phosphate: step 1/1. It participates in carbohydrate biosynthesis; gluconeogenesis. Functionally, triosephosphate isomerase is an extremely efficient metabolic enzyme that catalyzes the interconversion between dihydroxyacetone phosphate (DHAP) and D-glyceraldehyde-3-phosphate (G3P) in glycolysis and gluconeogenesis. In terms of biological role, it is also responsible for the non-negligible production of methylglyoxal a reactive cytotoxic side-product that modifies and can alter proteins, DNA and lipids. The protein is Triosephosphate isomerase (TPI1) of Pongo abelii (Sumatran orangutan).